Consider the following 114-residue polypeptide: DNA-directed RNA polymerases II, IV and V subunit 9A (114 aa).

Zn(2+)-binding residues include Cys-7, Cys-10, Cys-29, Cys-32, Cys-76, Cys-79, Cys-103, and Cys-108. A TFIIS-type zinc finger spans residues 72 to 113 (KAVRCSKCQHREAVFFQATARGEEGMTLFFVCCNPNCGHRWR).

The protein belongs to the archaeal RpoM/eukaryotic RPA12/RPB9/RPC11 RNA polymerase family. Component of the RNA polymerase II, IV and V complexes. Interacts with NRPD1.

It is found in the nucleus. Its subcellular location is the nucleolus. In terms of biological role, DNA-dependent RNA polymerase catalyzes the transcription of DNA into RNA using the four ribonucleoside triphosphates as substrates. Component of RNA polymerase II which synthesizes mRNA precursors and many functional non-coding RNAs. Pol II is the central component of the basal RNA polymerase II transcription machinery. It is composed of mobile elements that move relative to each other. Component of RNA polymerases IV and V which mediate short-interfering RNAs (siRNA) accumulation and subsequent RNA-directed DNA methylation-dependent (RdDM) transcriptional gene silencing (TGS) of endogenous repeated sequences, including transposable elements. Required for RNA silencing. This is DNA-directed RNA polymerases II, IV and V subunit 9A (NRPB9A) from Arabidopsis thaliana (Mouse-ear cress).